Consider the following 494-residue polypeptide: Ketol-acid reductoisomerase (NADP(+)) (494 aa).

Positions 14–208 constitute a KARI N-terminal Rossmann domain; it reads LEQLGKCRFM…GGHRAGVLQS (195 aa). Residues 45 to 48, arginine 68, arginine 76, serine 78, and 108 to 110 each bind NADP(+); these read CGAQ and DKQ. Histidine 132 is an active-site residue. Residue glycine 158 participates in NADP(+) binding. 2 consecutive KARI C-terminal knotted domains span residues 209 to 344 and 345 to 487; these read SFVA…NAPA and FDGA…MKDM. 4 residues coordinate Mg(2+): aspartate 217, glutamate 221, glutamate 389, and glutamate 393. Serine 414 contacts substrate.

The protein belongs to the ketol-acid reductoisomerase family. Mg(2+) is required as a cofactor.

The enzyme catalyses (2R)-2,3-dihydroxy-3-methylbutanoate + NADP(+) = (2S)-2-acetolactate + NADPH + H(+). The catalysed reaction is (2R,3R)-2,3-dihydroxy-3-methylpentanoate + NADP(+) = (S)-2-ethyl-2-hydroxy-3-oxobutanoate + NADPH + H(+). It participates in amino-acid biosynthesis; L-isoleucine biosynthesis; L-isoleucine from 2-oxobutanoate: step 2/4. Its pathway is amino-acid biosynthesis; L-valine biosynthesis; L-valine from pyruvate: step 2/4. Its function is as follows. Involved in the biosynthesis of branched-chain amino acids (BCAA). Catalyzes an alkyl-migration followed by a ketol-acid reduction of (S)-2-acetolactate (S2AL) to yield (R)-2,3-dihydroxy-isovalerate. In the isomerase reaction, S2AL is rearranged via a Mg-dependent methyl migration to produce 3-hydroxy-3-methyl-2-ketobutyrate (HMKB). In the reductase reaction, this 2-ketoacid undergoes a metal-dependent reduction by NADPH to yield (R)-2,3-dihydroxy-isovalerate. The polypeptide is Ketol-acid reductoisomerase (NADP(+)) (Tolumonas auensis (strain DSM 9187 / NBRC 110442 / TA 4)).